A 162-amino-acid chain; its full sequence is NADPH-dependent 7-cyano-7-deazaguanine reductase (162 aa).

The active-site Thioimide intermediate is the C53. D60 serves as the catalytic Proton donor. Substrate is bound by residues 75-77 and 94-95; these read VES and HE.

The protein belongs to the GTP cyclohydrolase I family. QueF type 1 subfamily.

It localises to the cytoplasm. The enzyme catalyses 7-aminomethyl-7-carbaguanine + 2 NADP(+) = 7-cyano-7-deazaguanine + 2 NADPH + 3 H(+). It functions in the pathway tRNA modification; tRNA-queuosine biosynthesis. Functionally, catalyzes the NADPH-dependent reduction of 7-cyano-7-deazaguanine (preQ0) to 7-aminomethyl-7-deazaguanine (preQ1). The polypeptide is NADPH-dependent 7-cyano-7-deazaguanine reductase (Exiguobacterium sibiricum (strain DSM 17290 / CCUG 55495 / CIP 109462 / JCM 13490 / 255-15)).